Consider the following 310-residue polypeptide: Bis(hydroxyethyl) terephthalate hydrolase (310 aa).

The segment at residues Met1–Ala48 is a signal peptide (tat-type signal). Bis(2-hydroxyethyl) terephthalate is bound at residue Phe111. Catalysis depends on Ser179, which acts as the Nucleophile. Residues Met180 and Trp204 each contribute to the bis(2-hydroxyethyl) terephthalate site. Active-site charge relay system residues include Asp225 and His257. Cysteines 290 and 306 form a disulfide.

This sequence belongs to the AB hydrolase superfamily. Predicted to be exported by the Tat system. The position of the signal peptide cleavage has not been experimentally proven.

Its subcellular location is the secreted. It carries out the reaction bis(2-hydroxyethyl) terephthalate + H2O = 4-[(2-hydroxyethoxy)carbonyl]benzoate + ethylene glycol + H(+). Functionally, catalyzes the degradation of bis(hydroxyethyl) terephthalate (BHET), a derived-oligomer of the plastic poly(ethylene terephthalate) (PET), hydrolyzing BHET to mono(2-hydroxyethyl) terephthalate (MHET). Shows no activity against PET. In Streptomyces coelicolor (strain ATCC BAA-471 / A3(2) / M145), this protein is Bis(hydroxyethyl) terephthalate hydrolase.